A 384-amino-acid polypeptide reads, in one-letter code: D-alanine--D-alanine ligase (384 aa).

One can recognise an ATP-grasp domain in the interval 167 to 374; sequence KKLFAAEGLP…YPTLLATMVD (208 aa). Residue 195–250 coordinates ATP; sequence CERLSLPVFVKPARGGSSIGISRVSSWGQLPSAIAYARRHDPKVIVEAAVNGRELE. Positions 329, 341, and 343 each coordinate Mg(2+).

It belongs to the D-alanine--D-alanine ligase family. Mg(2+) is required as a cofactor. The cofactor is Mn(2+).

The protein localises to the cytoplasm. It carries out the reaction 2 D-alanine + ATP = D-alanyl-D-alanine + ADP + phosphate + H(+). Its pathway is cell wall biogenesis; peptidoglycan biosynthesis. Functionally, cell wall formation. In Mycobacterium leprae (strain TN), this protein is D-alanine--D-alanine ligase.